The following is a 249-amino-acid chain: Flavin-dependent thymidylate synthase (249 aa).

Positions Val8 to Ser225 constitute a ThyX domain. Residues Ser62, Arg86–Arg88, and Gln94 each bind FAD. DUMP-binding positions include Gln83–Arg86, Gln94–Arg98, and Arg164. Residues Arg86 to Ser96 carry the ThyX motif motif. Residues Asn180 to Arg182 and Asn186 each bind FAD. A dUMP-binding site is contributed by Arg191. Arg191 functions as the Involved in ionization of N3 of dUMP, leading to its activation in the catalytic mechanism.

It belongs to the thymidylate synthase ThyX family. Homotetramer. It depends on FAD as a cofactor.

The catalysed reaction is dUMP + (6R)-5,10-methylene-5,6,7,8-tetrahydrofolate + NADPH + H(+) = dTMP + (6S)-5,6,7,8-tetrahydrofolate + NADP(+). It functions in the pathway pyrimidine metabolism; dTTP biosynthesis. Catalyzes the reductive methylation of 2'-deoxyuridine-5'-monophosphate (dUMP) to 2'-deoxythymidine-5'-monophosphate (dTMP) while utilizing 5,10-methylenetetrahydrofolate (mTHF) as the methyl donor, and NADPH and FADH(2) as the reductant. The protein is Flavin-dependent thymidylate synthase of Clostridium tetani (strain Massachusetts / E88).